We begin with the raw amino-acid sequence, 151 residues long: UPF0756 membrane protein GTNG_2661 (151 aa).

Helical transmembrane passes span 5-25, 53-73, 86-106, and 116-136; these read VLFLLLLLAIGVIAKNQSLII, WGVTVITVAVLAPIATGEIGF, WIALLFGIFVALIAKGGVMLL, and LVLGTVIAVSLFHGVAVGPLI.

Belongs to the UPF0756 family.

The protein localises to the cell membrane. The chain is UPF0756 membrane protein GTNG_2661 from Geobacillus thermodenitrificans (strain NG80-2).